A 214-amino-acid polypeptide reads, in one-letter code: Large ribosomal subunit protein uL3 (214 aa).

The tract at residues 131–155 (GAQRTSHGNSRSHRVPGSIGMAQDP) is disordered. Q153 carries the post-translational modification N5-methylglutamine.

It belongs to the universal ribosomal protein uL3 family. Part of the 50S ribosomal subunit. Forms a cluster with proteins L14 and L19. Post-translationally, methylated by PrmB.

Its function is as follows. One of the primary rRNA binding proteins, it binds directly near the 3'-end of the 23S rRNA, where it nucleates assembly of the 50S subunit. This Neisseria meningitidis serogroup C (strain 053442) protein is Large ribosomal subunit protein uL3.